The following is a 586-amino-acid chain: Putative butyrophilin subfamily 2 member A3 (586 aa).

A signal peptide spans 1–27; it reads MEPAAALHFSRPASLLLLLSLCALVSA. An Ig-like V-type domain is found at 28 to 139; that stretch reads QVTVVGPTDP…SCNEAILHLV (112 aa). The Extracellular segment spans residues 28–246; it reads QVTVVGPTDP…SFMPSRSPCV (219 aa). Residues Asn45, Asn112, Asn214, and Asn220 are each glycosylated (N-linked (GlcNAc...) asparagine). A disulfide bridge links Cys50 with Cys123. A helical transmembrane segment spans residues 247 to 267; it reads VILPVIMIILMIPIAICIYWI. Topologically, residues 268–586 are cytoplasmic; it reads NNLQKEKKDS…VPQLPARKKV (319 aa). The B30.2/SPRY domain occupies 281-474; that stretch reads TFNLCLSLAG…ILICSAFTGA (194 aa).

The protein belongs to the immunoglobulin superfamily. BTN/MOG family.

The protein resides in the membrane. The sequence is that of Putative butyrophilin subfamily 2 member A3 (BTN2A3P) from Homo sapiens (Human).